We begin with the raw amino-acid sequence, 484 residues long: Major extracellular endoglucanase (484 aa).

Positions 1–25 are cleaved as a signal peptide; that stretch reads MSIFRTASTLALATALALAAGPAFS. The active-site Proton donor is Glu-182. Catalysis depends on Glu-303, which acts as the Nucleophile. Residues 370 to 402 form a disordered region; the sequence is GTAGNTTPTPTPTPTPTPTPTPTPTPTPTPGTS. Positions 375–399 are thr-Pro repeats ('hinge') (Pro-Thr box); sequence TTPTPTPTPTPTPTPTPTPTPTPTP. Over residues 378–398 the composition is skewed to pro residues; the sequence is TPTPTPTPTPTPTPTPTPTPT. The CBM2 domain occupies 395-484; sequence PTPTPGTSTF…TAEFGFCAAS (90 aa).

This sequence belongs to the glycosyl hydrolase 5 (cellulase A) family.

It carries out the reaction Endohydrolysis of (1-&gt;4)-beta-D-glucosidic linkages in cellulose, lichenin and cereal beta-D-glucans.. This is Major extracellular endoglucanase (engXCA) from Xanthomonas campestris pv. campestris (strain ATCC 33913 / DSM 3586 / NCPPB 528 / LMG 568 / P 25).